A 347-amino-acid chain; its full sequence is SUMO-activating enzyme subunit 1 (347 aa).

Belongs to the ubiquitin-activating E1 family. As to quaternary structure, heterodimer of sae1 and uba2/sae2. The heterodimer corresponds to the two domains that are encoded on a single polypeptide chain in ubiquitin-activating enzyme E1. Interacts with ube2i.

The protein localises to the nucleus. Its pathway is protein modification; protein sumoylation. Its function is as follows. The heterodimer acts as an E1 ligase for sumo1, sumo2, and sumo3. It mediates ATP-dependent activation of sumo proteins followed by formation of a thioester bond between a sumo protein and a conserved active site cysteine residue on uba2/sae2. The chain is SUMO-activating enzyme subunit 1 (sae1) from Xenopus tropicalis (Western clawed frog).